Reading from the N-terminus, the 300-residue chain is Eukaryotic translation initiation factor 3 subunit F (300 aa).

One can recognise an MPN domain in the interval 33-169 (VKVHPVALFS…VQCYVSALLG (137 aa)).

Belongs to the eIF-3 subunit F family. As to quaternary structure, component of the eukaryotic translation initiation factor 3 (eIF-3) complex.

It localises to the cytoplasm. Functionally, component of the eukaryotic translation initiation factor 3 (eIF-3) complex, which is involved in protein synthesis of a specialized repertoire of mRNAs and, together with other initiation factors, stimulates binding of mRNA and methionyl-tRNAi to the 40S ribosome. The eIF-3 complex specifically targets and initiates translation of a subset of mRNAs involved in cell proliferation. The protein is Eukaryotic translation initiation factor 3 subunit F of Malassezia globosa (strain ATCC MYA-4612 / CBS 7966) (Dandruff-associated fungus).